A 576-amino-acid polypeptide reads, in one-letter code: MNILELSEQEIIRRNSLNELRAMGIDPYPAAEYVTNAFSTDIKAEFKDEDEPRQVSVAGRIMSRRVMGKASFIELQDSKGRIQVYITRDDICPGEDKELYNSVFKRLLDLGDFVGIEGFVFRTQMGEISIHAKKLTVLAKSIKPLPIVKYKDGVAYDSFEDPELRYRQRYVDLVVNEGIKETFEKRATVVRTLRNALDEAGYTEVETPILQSIAGGASARPFITHHNSLDIDLYLRIATELYLKRLIVGGFEGVYEIGKNFRNEGMDRTHNPEFTCMELYVQYKDYNWMMSFTEKLLERICIAVNGSTETVVDGKTISFKAPYRRLPILDAIKEKTGYDLNGKSEEEIRQICKELKMEEIDDTMGKGKLIDEIFGEFCEGSYIQPTFITDYPVEMSPLTKMHRSKPGLTERFELMVNGKELANAYSELNDPLDQEERFKEQMRLADKGDDEAMIIDQDFLRALQYGMPPTSGIGIGIDRLVMLMTGQTTIQEVLFFPQMRPEKVIKKDPAAKYMELGIAEDWVPVIQKAGYNTVADMQDVNPQKLHQDICGINKKYKLELTNPSVNDVTEWINKLK.

Mg(2+)-binding residues include Glu413 and Glu420.

This sequence belongs to the class-II aminoacyl-tRNA synthetase family. As to quaternary structure, homodimer. Mg(2+) is required as a cofactor.

The protein resides in the cytoplasm. The catalysed reaction is tRNA(Lys) + L-lysine + ATP = L-lysyl-tRNA(Lys) + AMP + diphosphate. This is Lysine--tRNA ligase from Bacteroides thetaiotaomicron (strain ATCC 29148 / DSM 2079 / JCM 5827 / CCUG 10774 / NCTC 10582 / VPI-5482 / E50).